Reading from the N-terminus, the 248-residue chain is uncharacterized protein (248 aa).

Residues 7 to 25 (TIFIGGIYGLGVYIGAVAW) traverse the membrane as a helical segment.

Belongs to the methyltransferase superfamily. METL family.

Its subcellular location is the mitochondrion inner membrane. Probable methyltransferase. This is an uncharacterized protein from Schizosaccharomyces pombe (strain 972 / ATCC 24843) (Fission yeast).